The primary structure comprises 445 residues: DDB1- and CUL4-associated factor 13 (445 aa).

Lys49 bears the N6-acetyllysine mark. WD repeat units lie at residues 64-104 (GHRD…CIRT), 107-146 (AHEG…YGDE), 149-191 (PLHT…PVCS), 194-234 (WGFD…PLKK), 236-276 (ILDM…TPVM), 280-319 (DHVS…SREV), and 323-362 (KRMQ…KLGV). A required for nucleolar location region spans residues 353 to 441 (KANASEKLGV…IVSEKKKHVV (89 aa)).

The protein belongs to the WD repeat DCAF13/WDSOF1 family. As to quaternary structure, part of the small subunit (SSU) processome, composed of more than 70 proteins and the RNA chaperone small nucleolar RNA (snoRNA) U3. Component of the DCX(DCAF13) E3 ubiquitin ligase complex, at least composed of CUL4 (CUL4A or CUL4B), DDB1, DCAF13 and RBX1. Interacts (via WD40 domain) with DDB1. Interacts with ESR1 and LATS1.

The protein localises to the nucleus. Its subcellular location is the nucleolus. It participates in protein modification; protein ubiquitination. In terms of biological role, part of the small subunit (SSU) processome, first precursor of the small eukaryotic ribosomal subunit. During the assembly of the SSU processome in the nucleolus, many ribosome biogenesis factors, an RNA chaperone and ribosomal proteins associate with the nascent pre-rRNA and work in concert to generate RNA folding, modifications, rearrangements and cleavage as well as targeted degradation of pre-ribosomal RNA by the RNA exosome. Participates in the 18S rRNA processing in growing oocytes, being essential for oocyte nonsurrounded nucleolus (NSN) to surrounded nucleolus (SN) transition. Functionally, substrate-recognition component of a DCX (DDB1-CUL4-X-box) E3 ubiquitin-protein ligase complex that plays a key role in embryo preimplantation and is required for normal meiotic cycle progression in oocytes. Acts as a maternal factor that regulates oocyte and zygotic chromatin tightness during maternal to zygotic transition. Also involved in the transformation of the endometrium into the decidua, known as decidualization, providing a solid foundation for implantation of blastocysts. Recognizes the histone methyltransferases SUV39H1 and SUV39H2 and directs them to polyubiquitination and proteasomal degradation, which facilitates the H3K9me3 removal and early zygotic gene expression, essential steps for progressive genome reprogramming and the establishment of pluripotency during preimplantation embryonic development. Supports the spindle assembly and chromosome condensation during oocyte meiotic division by targeting the polyubiquitination and degradation of PTEN, a lipid phosphatase that inhibits PI3K pathway as well as oocyte growth and maturation. Targets PMP22 for polyubiquitination and proteasomal degradation. The sequence is that of DDB1- and CUL4-associated factor 13 (DCAF13) from Pongo abelii (Sumatran orangutan).